Here is a 130-residue protein sequence, read N- to C-terminus: Small ribosomal subunit protein uS9 (130 aa).

The protein belongs to the universal ribosomal protein uS9 family.

This is Small ribosomal subunit protein uS9 from Streptococcus agalactiae serotype Ia (strain ATCC 27591 / A909 / CDC SS700).